Reading from the N-terminus, the 724-residue chain is MDCLCIVTTKKYRYQDEDTPPLEHSPAHLPNQANSPPVIVNTDTLEAPGYELQVNGTEGEMEYEEITLERGNSGLGFSIAGGTDNPHIGDDPSIFITKIIPGGAAAQDGRLRVNDSILFVNEVDVREVTHSAAVEALKEAGSIVRLYVMRRKPPAEKVMEIKLIKGPKGLGFSIAGGVGNQHIPGDNSIYVTKIIEGGAAHKDGRLQIGDKILAVNSVGLEDVMHEDAVAALKNTYDVVYLKVAKPSNAYLSDSYAPPDITTSYSQHLDNEISHSSYLGTDYPTAMTPTSPRRYSPVAKDLLGEEDIPREPRRIVIHRGSTGLGFNIVGGEDGEGIFISFILAGGPADLSGELRKGDQILSVNGVDLRNASHEQAAIALKNAGQTVTIIAQYKPEEYSRFEAKIHDLREQLMNSSLGSGTASLRSNPKRGFYIRALFDYDKTKDCGFLSQALSFRFGDVLHVIDASDEEWWQARRVHSDSETDDIGFIPSKRRVERREWSRLKAKDWGSSSGSQGREDSVLSYETVTQMEVHYARPIIILGPTKDRANDDLLSEFPDKFGSCVPHTTRPKREYEIDGRDYHFVSSREKMEKDIQAHKFIEAGQYNSHLYGTSVQSVREVAEQGKHCILDVSANAVRRLQAAHLHPIAIFIRPRSLENVLEINKRITEEQARKAFDRATKLEQEFTECFSAIVEGDSFEEIYHKVKRVIEDLSGPYIWVPARERL.

Residues Cys3 and Cys5 are each lipidated (S-palmitoyl cysteine). A disordered region spans residues 15-35; it reads QDEDTPPLEHSPAHLPNQANS. PDZ domains are found at residues 65 to 151 and 160 to 246; these read EITL…VMRR and EIKL…VAKP. Ser73 and Ser142 each carry phosphoserine. Tyr240 is modified (phosphotyrosine). At Ser295 the chain carries Phosphoserine. One can recognise a PDZ 3 domain in the interval 313–393; that stretch reads RIVIHRGSTG…QTVTIIAQYK (81 aa). 2 positions are modified to phosphoserine: Ser415 and Ser418. At Thr420 the chain carries Phosphothreonine. A phosphoserine mark is found at Ser422, Ser425, Ser449, and Ser480. Residues 428-498 enclose the SH3 domain; that stretch reads KRGFYIRALF…PSKRRVERRE (71 aa). Residues 534-709 enclose the Guanylate kinase-like domain; the sequence is ARPIIILGPT…IYHKVKRVIE (176 aa). Residue Tyr580 is modified to Phosphotyrosine. Ser606 and Ser654 each carry phosphoserine. Phosphotyrosine is present on Tyr715.

It belongs to the MAGUK family. In terms of assembly, interacts through its PDZ domains with ANO2 and NETO1. Interacts through its first two PDZ domains with GRIN2A, GRIN2B, GRIN2C, GRIN2D. Interacts with ASIC3. Interacts with SEMA4C. Interacts with CXADR. Interacts with KCND2. Interacts with SYNGAP1. Interacts with LRRC4 and LRRC4B. Interacts with ERBB4. Interacts with KCNA1, KCNA2, KCNA3 and KCNA4. Interacts through its first PDZ domain with GRIK2, KCNA4 and CRIPT. Interacts through its second PDZ domain with the PDZ domain of NOS1 or the C-terminus of CAPON. Interacts through its third PDZ domain with NLGN1 and CRIPT, and probably with NLGN2 and NLGN3. Interacts through its guanylate kinase-like domain with KIF13B. Interacts through its guanylate kinase-like domain with DLGAP1/GKAP, DLGAP2, DLGAP3, DLGAP4, MAP1A, BEGAIN and SIPA1L1. Isoform 2 interacts through an L27 domain with HGS/HRS and the first L27 domain of CASK. Interacts with ADR1B and ANKS1B. May interact with HTR2A. Interacts with ADAM22. Interacts with KLHL17 and LGI1. Interacts with FRMPD4 (via C-terminus). Interacts with LRFN1, LRFN2 and LRFN4. Interacts (via N-terminal tandem pair of PDZ domains) with GPER1 (via C-terminus tail motif); the interaction is direct and induces the increase of GPER1 protein levels residing at the plasma membrane surface in a estradiol-independent manner. Interacts (via N-terminus tandem pair of PDZ domains) with NOS1 (via N-terminal domain). Interacts with SHANK3. Interacts with KCNJ4. Interacts with GPR85. Interacts with CACNG2 and MPP2 (via the SH3-Guanylate kinase-like sub-module). Interacts with ADGRB1. Found in a complex with PRR7 and GRIN1. Interacts (via PDZ3 domain and to lesser degree via PDZ2 domain) with PRR7. Component of the postsynaptic hippocampal AMPA-type glutamate receptor (AMPAR) complex, at least composed of pore forming AMPAR subunits GRIA1, GRIA2 and GRIA3 and AMPAR auxiliary proteins SHISA6 and SHISA7. Interacts (via its first two PDZ domains) with SHISA6 and SHISA7 (via PDZ-binding motif); the interaction is direct. Interacts with RPH3A and GRIN2A; this ternary complex regulates NMDA receptor composition at postsynaptic membranes. Interacts with ABR and BCR. Interacts with DGKI (via PDZ-binding motif); controls the localization of DGKI to the synapse. Interacts with C9orf72, SMCR8 and RAB39B. Interacts with ZDHHC5. Interacts with PTEN (via PDZ domain-binding motif); the interaction is induced by NMDA and is required for PTEN location at postsynaptic density. Found in a complex with GRIA1, GRIA2, GRIA3, GRIA4, CACNG8 and CNIH2. Interacts with FAM81A; the interaction facilitates condensate formation via liquid-liquid phase separation. Interacts with ADGRL3. Interacts with SORCS3. In terms of processing, palmitoylated. Palmitoylation is required for targeting to postsynaptic density, plasma membrane and synapses. Palmitoylation by ZDHHC2 occurs when the synaptic activity decreases and induces DLG4 synaptic clustering. Palmitoylation by ZDHHC15 regulates trafficking to the postsynaptic density and function in synaptogenesis. Palmitoylation may play a role in glutamate receptor GRIA1 synapse clustering. Depalmitoylated by ABHD17A and ABHD17B and to a lesser extent by ABHD17C, ABHD12, ABHD13, LYPLA1 and LYPLA2. Undergoes rapid synaptic palmitoylation/depalmitoylation cycles during neuronal development which slow down in mature neurons. Post-translationally, ubiquitinated by MDM2 in response to NMDA receptor activation, leading to proteasome-mediated degradation of DLG4 which is required for AMPA receptor endocytosis. In terms of tissue distribution, brain.

It is found in the cell membrane. It localises to the postsynaptic density. The protein resides in the synapse. Its subcellular location is the cytoplasm. The protein localises to the cell projection. It is found in the axon. It localises to the dendritic spine. The protein resides in the dendrite. Its subcellular location is the presynapse. In terms of biological role, postsynaptic scaffolding protein that plays a critical role in synaptogenesis and synaptic plasticity by providing a platform for the postsynaptic clustering of crucial synaptic proteins. Interacts with the cytoplasmic tail of NMDA receptor subunits and shaker-type potassium channels. Required for synaptic plasticity associated with NMDA receptor signaling. Overexpression or depletion of DLG4 changes the ratio of excitatory to inhibitory synapses in hippocampal neurons. May reduce the amplitude of ASIC3 acid-evoked currents by retaining the channel intracellularly. May regulate the intracellular trafficking of ADR1B. Also regulates AMPA-type glutamate receptor (AMPAR) immobilization at postsynaptic density keeping the channels in an activated state in the presence of glutamate and preventing synaptic depression. Under basal conditions, cooperates with FYN to stabilize palmitoyltransferase ZDHHC5 at the synaptic membrane through FYN-mediated phosphorylation of ZDHHC5 and its subsequent inhibition of association with endocytic proteins. The protein is Disks large homolog 4 of Homo sapiens (Human).